A 312-amino-acid chain; its full sequence is D-alanine--D-alanine ligase (312 aa).

An ATP-grasp domain is found at 99-304 (KKILKAEGIP…FEDLVEKILM (206 aa)). ATP is bound at residue 131-186 (LQTLKLPVVIKAPREGSTIGIEFVFSKQELPKAIKKVLEIDKQLLVEEFIEGVEVT). 3 residues coordinate Mg(2+): Asp-257, Glu-271, and Asn-273.

This sequence belongs to the D-alanine--D-alanine ligase family. Mg(2+) is required as a cofactor. It depends on Mn(2+) as a cofactor.

It localises to the cytoplasm. The enzyme catalyses 2 D-alanine + ATP = D-alanyl-D-alanine + ADP + phosphate + H(+). It participates in cell wall biogenesis; peptidoglycan biosynthesis. Functionally, cell wall formation. This chain is D-alanine--D-alanine ligase, found in Carboxydothermus hydrogenoformans (strain ATCC BAA-161 / DSM 6008 / Z-2901).